Consider the following 490-residue polypeptide: ATP synthase subunit beta (490 aa).

Residue 173–180 (GGAGVGKT) participates in ATP binding.

This sequence belongs to the ATPase alpha/beta chains family. F-type ATPases have 2 components, CF(1) - the catalytic core - and CF(0) - the membrane proton channel. CF(1) has five subunits: alpha(3), beta(3), gamma(1), delta(1), epsilon(1). CF(0) has three main subunits: a(1), b(2) and c(9-12). The alpha and beta chains form an alternating ring which encloses part of the gamma chain. CF(1) is attached to CF(0) by a central stalk formed by the gamma and epsilon chains, while a peripheral stalk is formed by the delta and b chains.

The protein resides in the cell membrane. The catalysed reaction is ATP + H2O + 4 H(+)(in) = ADP + phosphate + 5 H(+)(out). In terms of biological role, produces ATP from ADP in the presence of a proton gradient across the membrane. The catalytic sites are hosted primarily by the beta subunits. This chain is ATP synthase subunit beta, found in Bifidobacterium longum subsp. infantis (strain ATCC 15697 / DSM 20088 / JCM 1222 / NCTC 11817 / S12).